A 296-amino-acid polypeptide reads, in one-letter code: Acetylglutamate kinase (296 aa).

Residues 67–68, arginine 89, and asparagine 194 contribute to the substrate site; that span reads GG.

The protein belongs to the acetylglutamate kinase family. ArgB subfamily.

The protein resides in the cytoplasm. It catalyses the reaction N-acetyl-L-glutamate + ATP = N-acetyl-L-glutamyl 5-phosphate + ADP. The protein operates within amino-acid biosynthesis; L-arginine biosynthesis; N(2)-acetyl-L-ornithine from L-glutamate: step 2/4. Functionally, catalyzes the ATP-dependent phosphorylation of N-acetyl-L-glutamate. The sequence is that of Acetylglutamate kinase from Brucella canis (strain ATCC 23365 / NCTC 10854 / RM-666).